A 396-amino-acid chain; its full sequence is Elongation factor Tu (396 aa).

Positions 10 to 206 (KPHCNIGTIG…NVDEYIPQPE (197 aa)) constitute a tr-type G domain. Residues 19–26 (GHVDHGKT) are G1. 19 to 26 (GHVDHGKT) contacts GTP. Thr-26 serves as a coordination point for Mg(2+). Positions 60 to 64 (GITIS) are G2. The tract at residues 81 to 84 (DCPG) is G3. GTP contacts are provided by residues 81–85 (DCPGH) and 136–139 (NKCD). Residues 136–139 (NKCD) are G4. The tract at residues 174–176 (SAL) is G5.

The protein belongs to the TRAFAC class translation factor GTPase superfamily. Classic translation factor GTPase family. EF-Tu/EF-1A subfamily. Monomer.

The protein resides in the cytoplasm. It carries out the reaction GTP + H2O = GDP + phosphate + H(+). Functionally, GTP hydrolase that promotes the GTP-dependent binding of aminoacyl-tRNA to the A-site of ribosomes during protein biosynthesis. The protein is Elongation factor Tu of Afipia carboxidovorans (strain ATCC 49405 / DSM 1227 / KCTC 32145 / OM5) (Oligotropha carboxidovorans).